The sequence spans 123 residues: Small ribosomal subunit protein uS12 (123 aa).

The disordered stretch occupies residues 1 to 28; the sequence is MPTIQQLIRTERSKVQKKTKSPALKQCP. D89 carries the 3-methylthioaspartic acid modification. The disordered stretch occupies residues 104-123; it reads ATGVKDRKQGRSKYGTKRPK. Positions 113-123 are enriched in basic residues; it reads GRSKYGTKRPK.

This sequence belongs to the universal ribosomal protein uS12 family. In terms of assembly, part of the 30S ribosomal subunit. Contacts proteins S8 and S17. May interact with IF1 in the 30S initiation complex.

In terms of biological role, with S4 and S5 plays an important role in translational accuracy. Functionally, interacts with and stabilizes bases of the 16S rRNA that are involved in tRNA selection in the A site and with the mRNA backbone. Located at the interface of the 30S and 50S subunits, it traverses the body of the 30S subunit contacting proteins on the other side and probably holding the rRNA structure together. The combined cluster of proteins S8, S12 and S17 appears to hold together the shoulder and platform of the 30S subunit. This chain is Small ribosomal subunit protein uS12, found in Gloeothece citriformis (strain PCC 7424) (Cyanothece sp. (strain PCC 7424)).